The chain runs to 554 residues: Phenylalanine--tRNA ligase beta subunit (554 aa).

The B5 domain maps to 276–351 (LTLKSRIISI…INYGYEKFEG (76 aa)). Residues aspartate 329, aspartate 335, glutamate 338, and glutamate 339 each coordinate Mg(2+).

This sequence belongs to the phenylalanyl-tRNA synthetase beta subunit family. Type 2 subfamily. In terms of assembly, tetramer of two alpha and two beta subunits. Requires Mg(2+) as cofactor.

The protein localises to the cytoplasm. It catalyses the reaction tRNA(Phe) + L-phenylalanine + ATP = L-phenylalanyl-tRNA(Phe) + AMP + diphosphate + H(+). The polypeptide is Phenylalanine--tRNA ligase beta subunit (Methanococcus maripaludis (strain C7 / ATCC BAA-1331)).